The sequence spans 230 residues: 2,3-bisphosphoglycerate-dependent phosphoglycerate mutase (230 aa).

Substrate-binding positions include 8–15 (RHGESEWN), 21–22 (TG), arginine 60, 87–90 (ERHY), lysine 98, 114–115 (RR), and 183–184 (GN). Histidine 9 serves as the catalytic Tele-phosphohistidine intermediate. The Proton donor/acceptor role is filled by glutamate 87.

Belongs to the phosphoglycerate mutase family. BPG-dependent PGAM subfamily.

It carries out the reaction (2R)-2-phosphoglycerate = (2R)-3-phosphoglycerate. The protein operates within carbohydrate degradation; glycolysis; pyruvate from D-glyceraldehyde 3-phosphate: step 3/5. In terms of biological role, catalyzes the interconversion of 2-phosphoglycerate and 3-phosphoglycerate. The sequence is that of 2,3-bisphosphoglycerate-dependent phosphoglycerate mutase from Streptococcus mutans serotype c (strain ATCC 700610 / UA159).